The primary structure comprises 151 residues: Large ribosomal subunit protein uL22 (151 aa).

This sequence belongs to the universal ribosomal protein uL22 family. Part of the 50S ribosomal subunit.

Its function is as follows. This protein binds specifically to 23S rRNA. It makes multiple contacts with different domains of the 23S rRNA in the assembled 50S subunit and ribosome. In terms of biological role, the globular domain of the protein is located near the polypeptide exit tunnel on the outside of the subunit, while an extended beta-hairpin is found that lines the wall of the exit tunnel in the center of the 70S ribosome. The polypeptide is Large ribosomal subunit protein uL22 (Thermofilum pendens (strain DSM 2475 / Hrk 5)).